A 353-amino-acid chain; its full sequence is Anthranilate phosphoribosyltransferase (353 aa).

Residues G79, 82–83 (GD), T87, 89–92 (NIST), 107–115 (KHGNHSFTS), and S119 contribute to the 5-phospho-alpha-D-ribose 1-diphosphate site. G79 serves as a coordination point for anthranilate. S91 contacts Mg(2+). Residue N110 coordinates anthranilate. Residue R165 participates in anthranilate binding. Residues D223 and E224 each coordinate Mg(2+).

It belongs to the anthranilate phosphoribosyltransferase family. In terms of assembly, homodimer. The cofactor is Mg(2+).

The enzyme catalyses N-(5-phospho-beta-D-ribosyl)anthranilate + diphosphate = 5-phospho-alpha-D-ribose 1-diphosphate + anthranilate. Its pathway is amino-acid biosynthesis; L-tryptophan biosynthesis; L-tryptophan from chorismate: step 2/5. Its function is as follows. Catalyzes the transfer of the phosphoribosyl group of 5-phosphorylribose-1-pyrophosphate (PRPP) to anthranilate to yield N-(5'-phosphoribosyl)-anthranilate (PRA). The protein is Anthranilate phosphoribosyltransferase of Methanococcoides burtonii (strain DSM 6242 / NBRC 107633 / OCM 468 / ACE-M).